The following is a 121-amino-acid chain: Large ribosomal subunit protein bL17 (121 aa).

The protein belongs to the bacterial ribosomal protein bL17 family. Part of the 50S ribosomal subunit. Contacts protein L32.

This Sulfurihydrogenibium sp. (strain YO3AOP1) protein is Large ribosomal subunit protein bL17.